The primary structure comprises 146 residues: Leptin (146 aa).

Cysteines 96 and 146 form a disulfide.

The protein belongs to the leptin family.

It localises to the secreted. Key player in the regulation of energy balance and body weight control. Once released into the circulation, has central and peripheral effects by binding LEPR, found in many tissues, which results in the activation of several major signaling pathways. In the hypothalamus, acts as an appetite-regulating factor that induces a decrease in food intake and an increase in energy consumption by inducing anorexinogenic factors and suppressing orexigenic neuropeptides, also regulates bone mass and secretion of hypothalamo-pituitary-adrenal hormones. In the periphery, increases basal metabolism, influences reproductive function, regulates pancreatic beta-cell function and insulin secretion, is pro-angiogenic for endothelial cell and affects innate and adaptive immunity. In the arcuate nucleus of the hypothalamus, activates by depolarization POMC neurons inducing FOS and SOCS3 expression to release anorexigenic peptides and inhibits by hyperpolarization NPY neurons inducing SOCS3 with a consequent reduction on release of orexigenic peptides. In addition to its known satiety inducing effect, has a modulatory role in nutrient absorption. In the intestine, reduces glucose absorption by enterocytes by activating PKC and leading to a sequential activation of p38, PI3K and ERK signaling pathways which exerts an inhibitory effect on glucose absorption. Acts as a growth factor on certain tissues, through the activation of different signaling pathways increases expression of genes involved in cell cycle regulation such as CCND1, via JAK2-STAT3 pathway, or VEGFA, via MAPK1/3 and PI3K-AKT1 pathways. May also play an apoptotic role via JAK2-STAT3 pathway and up-regulation of BIRC5 expression. Pro-angiogenic, has mitogenic activity on vascular endothelial cells and plays a role in matrix remodeling by regulating the expression of matrix metalloproteinases (MMPs) and tissue inhibitors of metalloproteinases (TIMPs). In innate immunity, modulates the activity and function of neutrophils by increasing chemotaxis and the secretion of oxygen radicals. Increases phagocytosis by macrophages and enhances secretion of pro-inflammatory mediators. Increases cytotoxic ability of NK cells. Plays a pro-inflammatory role, in synergy with IL1B, by inducing NOS2 which promotes the production of IL6, IL8 and Prostaglandin E2, through a signaling pathway that involves JAK2, PI3K, MAP2K1/MEK1 and MAPK14/p38. In adaptive immunity, promotes the switch of memory T-cells towards T helper-1 cell immune responses. Increases CD4(+)CD25(-) T-cell proliferation and reduces autophagy during TCR (T-cell receptor) stimulation, through MTOR signaling pathway activation and BCL2 up-regulation. The chain is Leptin (LEP) from Gorilla gorilla gorilla (Western lowland gorilla).